The sequence spans 440 residues: Microtubule-associated tumor suppressor 1 homolog A (440 aa).

The interval 44–67 is disordered; that stretch reads KSRTNSKNPQPPTNGQPDLVPPES. The stretch at 69 to 401 forms a coiled coil; that stretch reads SRNVEYYKAQ…RLSMENEELL (333 aa). Positions 407–440 are disordered; it reads GDLNSPRKISPSPSLNLQSPRTSGMFSSPPVSPR. The segment covering 417-432 has biased composition (polar residues); the sequence is PSPSLNLQSPRTSGMF.

This sequence belongs to the MTUS1 family. Homodimer.

The protein resides in the mitochondrion. The protein localises to the golgi apparatus. Its subcellular location is the cell membrane. It localises to the nucleus. Its function is as follows. May inhibit cell proliferation. In Danio rerio (Zebrafish), this protein is Microtubule-associated tumor suppressor 1 homolog A (mtus1a).